We begin with the raw amino-acid sequence, 362 residues long: Transcription factor bHLH133 (362 aa).

Positions 209–258 (LQVPSSQSTLKVRKEKLGGRIASLHQLVSPFGKTDTASVLSEAIGYIRFL) constitute a bHLH domain.

This sequence belongs to the bHLH protein family. As to quaternary structure, homodimer.

It localises to the nucleus. This chain is Transcription factor bHLH133 (BHLH133), found in Arabidopsis thaliana (Mouse-ear cress).